We begin with the raw amino-acid sequence, 191 residues long: Large ribosomal subunit protein uL6B (191 aa).

It belongs to the universal ribosomal protein uL6 family. In terms of assembly, component of the large ribosomal subunit (LSU). Mature yeast ribosomes consist of a small (40S) and a large (60S) subunit. The 40S small subunit contains 1 molecule of ribosomal RNA (18S rRNA) and 33 different proteins (encoded by 57 genes). The large 60S subunit contains 3 rRNA molecules (25S, 5.8S and 5S rRNA) and 46 different proteins (encoded by 81 genes).

Its subcellular location is the cytoplasm. Its function is as follows. Component of the ribosome, a large ribonucleoprotein complex responsible for the synthesis of proteins in the cell. The small ribosomal subunit (SSU) binds messenger RNAs (mRNAs) and translates the encoded message by selecting cognate aminoacyl-transfer RNA (tRNA) molecules. The large subunit (LSU) contains the ribosomal catalytic site termed the peptidyl transferase center (PTC), which catalyzes the formation of peptide bonds, thereby polymerizing the amino acids delivered by tRNAs into a polypeptide chain. The nascent polypeptides leave the ribosome through a tunnel in the LSU and interact with protein factors that function in enzymatic processing, targeting, and the membrane insertion of nascent chains at the exit of the ribosomal tunnel. In Saccharomyces cerevisiae (strain ATCC 204508 / S288c) (Baker's yeast), this protein is Large ribosomal subunit protein uL6B.